A 151-amino-acid chain; its full sequence is D-aminoacyl-tRNA deacylase (151 aa).

Residues 136-137 (GP) carry the Gly-cisPro motif, important for rejection of L-amino acids motif.

The protein belongs to the DTD family. As to quaternary structure, homodimer.

The protein resides in the cytoplasm. The enzyme catalyses glycyl-tRNA(Ala) + H2O = tRNA(Ala) + glycine + H(+). The catalysed reaction is a D-aminoacyl-tRNA + H2O = a tRNA + a D-alpha-amino acid + H(+). Its function is as follows. An aminoacyl-tRNA editing enzyme that deacylates mischarged D-aminoacyl-tRNAs. Also deacylates mischarged glycyl-tRNA(Ala), protecting cells against glycine mischarging by AlaRS. Acts via tRNA-based rather than protein-based catalysis; rejects L-amino acids rather than detecting D-amino acids in the active site. By recycling D-aminoacyl-tRNA to D-amino acids and free tRNA molecules, this enzyme counteracts the toxicity associated with the formation of D-aminoacyl-tRNA entities in vivo and helps enforce protein L-homochirality. This chain is D-aminoacyl-tRNA deacylase, found in Lactococcus lactis subsp. cremoris (strain MG1363).